The sequence spans 108 residues: Urease subunit gamma (108 aa).

The protein belongs to the urease gamma subunit family. As to quaternary structure, heterotrimer of UreA (gamma), UreB (beta) and UreC (alpha) subunits. Three heterotrimers associate to form the active enzyme.

It localises to the cytoplasm. The catalysed reaction is urea + 2 H2O + H(+) = hydrogencarbonate + 2 NH4(+). It functions in the pathway nitrogen metabolism; urea degradation; CO(2) and NH(3) from urea (urease route): step 1/1. The chain is Urease subunit gamma from Trichodesmium erythraeum (strain IMS101).